A 347-amino-acid chain; its full sequence is Haptoglobin (347 aa).

The first 18 residues, 1-18 (MRALGAVVALLLCGQLFA), serve as a signal peptide directing secretion. The 58-residue stretch at 31-88 (DSCPKPPEIPKGYVEHMVRYHCQTYYKLRTAGDGVYTLDSNKQWTNKVTGEKLPECEA) folds into the Sushi domain. 2 disulfide bridges follow: Cys52-Cys86 and Cys90-Cys207. The Peptidase S1 domain occupies 103–345 (IMGGSLDAKG…ILDWIQTTIA (243 aa)). Asn125, Asn151, Asn183, and Asn232 each carry an N-linked (GlcNAc...) asparagine glycan. 2 cysteine pairs are disulfide-bonded: Cys250–Cys281 and Cys292–Cys322. The segment at 259–264 (VPEKKT) is interaction with CD163.

The protein belongs to the peptidase S1 family. As to quaternary structure, tetramer of two alpha and two beta chains; disulfide-linked. The hemoglobin/haptoglobin complex is composed of a haptoglobin dimer bound to two hemoglobin alpha-beta dimers. Interacts with CD163. Interacts with ERGIC3. In terms of tissue distribution, expressed by the liver and secreted in plasma.

The protein localises to the secreted. Functionally, as a result of hemolysis, hemoglobin is found to accumulate in the kidney and is secreted in the urine. Haptoglobin captures, and combines with free plasma hemoglobin to allow hepatic recycling of heme iron and to prevent kidney damage. Haptoglobin also acts as an antioxidant, has antibacterial activity and plays a role in modulating many aspects of the acute phase response. Hemoglobin/haptoglobin complexes are rapidly cleared by the macrophage CD163 scavenger receptor expressed on the surface of liver Kupfer cells through an endocytic lysosomal degradation pathway. The protein is Haptoglobin (HP) of Sus scrofa (Pig).